A 154-amino-acid polypeptide reads, in one-letter code: Ascorbate-specific PTS system EIIA component (154 aa).

The PTS EIIA type-2 domain occupies Ser-6–Thr-150. His-68 (tele-phosphohistidine intermediate) is an active-site residue. His-68 carries the post-translational modification Phosphohistidine.

The protein resides in the cytoplasm. Its function is as follows. The phosphoenolpyruvate-dependent sugar phosphotransferase system (sugar PTS), a major carbohydrate active transport system, catalyzes the phosphorylation of incoming sugar substrates concomitantly with their translocation across the cell membrane. The enzyme II UlaABC PTS system is involved in ascorbate transport. The protein is Ascorbate-specific PTS system EIIA component (ulaC) of Shigella dysenteriae serotype 1 (strain Sd197).